Consider the following 858-residue polypeptide: ATP-dependent DNA helicase Q-like SIM (858 aa).

The UBA domain occupies 2 to 44; it reads DLSSDQLVMKIVEMGFEKLDALEAVKAVGGKSCDDAVEYILKG. The Helicase ATP-binding domain maps to 177–353; that stretch reads LSTWVAHKDC…LESLHLSKET (177 aa). ATP is bound at residue 190-197; that stretch reads AATGSGKS. The short motif at 288–291 is the DEAH box element; sequence DEAH. Residues 402–450 are disordered; the sequence is LAVISRESEEQTDFGSHDSENIHETDYDEDEEDQENSLAKKNSSNGKEL. The span at 416 to 426 shows a compositional bias: basic and acidic residues; sequence GSHDSENIHET. Acidic residues predominate over residues 427 to 436; it reads DYDEDEEDQE. Residues 437-448 show a composition bias toward polar residues; the sequence is NSLAKKNSSNGK. Residues 491 to 627 enclose the Helicase C-terminal domain; that stretch reads EKQKDLEGLT…QTEQAYKMLS (137 aa). The tract at residues 822 to 858 is disordered; sequence RQRLERRERKPRRERKPRKKRTRGRSSTKLHPWRSKE. Positions 830-858 are enriched in basic residues; sequence RKPRRERKPRKKRTRGRSSTKLHPWRSKE.

The protein belongs to the helicase family. RecQ subfamily. Mg(2+) is required as a cofactor. Mn(2+) serves as cofactor. Mostly expressed in roots and seedlings, and, to a lower extent, in leaves, shoots, shoot apical mersitem, inflorescences, flowers, siliques and seeds.

It is found in the nucleus. It catalyses the reaction Couples ATP hydrolysis with the unwinding of duplex DNA by translocating in the 3'-5' direction.. The enzyme catalyses ATP + H2O = ADP + phosphate + H(+). In terms of biological role, plant specific, probable 3'-5' DNA helicase that may play a role in the repair of DNA. The protein is ATP-dependent DNA helicase Q-like SIM (RECQSIM) of Arabidopsis thaliana (Mouse-ear cress).